The chain runs to 866 residues: MGNRGMEELIPLVNKLQDAFSSIGQSCHLDLPQIAVVGGQSAGKSSVLENFVGRDFLPRGSGIVTRRPLILQLIFSKTEYAEFLHCKSRKFTDFEEVRQEIEAETDRVTGTNKGISPVPINLRIYSPHVLNLTLIDLPGITKVPVGDQPQDIEYQIKDMILQFISRESSLILAVTPANMDLANSDALKLAKEVDPQGLRTIGVITKLDLMDEGTDARDVLENKLLPLRRGYIGVVNRSQKDIEGKKDIRTALAAERKFFLSHPAYRHIADRMGTPHLQKTLNQQLTNHIRESLPALRSKLQSQLLSLEKEVEEYKNFRPDDPTRKTKALLQMVQQFGVDFEKRIEGSGDQVDTLELSGGARINRIFHERFPFELVKMEFDEKDLRREISYAIKNIHGVRTGLFTPDLAFEAIVKKQVVKLKEPCLKCVDLVIQELINTVRQCTSKLSSYPRLREETERIVTTYIREREGRTKDQILLLIDIEQSYINTNHEDFIGFANAQQRSTQLNKKRAVPNQVIRRGWLTINNISLMKGGSKEYWFVLTAESLSWYKDEEEKEKKYMLPLDNLKIRDVEKGFMSNKHVFAIFNTEQRNVYKDLRQIELACDSQEDVDSWKASFLRAGVYPEKDQAENEDGAQENTFSMDPQLERQVETIRNLVDSYVAIINKSIRDLMPKTIMHLMINNTKAFIHYELLAYLYSSADQSSLMEESADQAQRRDDMLRMYHALKEALNIIGDISTSTVSTPVPPPVDDTWIQNTSSHSPTPQRRPVSSVHPPGRPPAVRGPTPGPPLIPVPVGPASFSAPPIPSRPGPHPGVFANNDPFSAPPQIPSRPARIPPGIPPGVPSRRPPAAPSRPTIIRPAEPSLLD.

Positions 28-294 (HLDLPQIAVV…LTNHIRESLP (267 aa)) constitute a Dynamin-type G domain. The segment at 38 to 45 (GGQSAGKS) is G1 motif. GDP is bound by residues serine 41, glycine 43, lysine 44, serine 45, serine 46, arginine 59, and glycine 60. The segment at 64-66 (VTR) is G2 motif. The interval 136–139 (DLPG) is G3 motif. The tract at residues 205-208 (TKLD) is G4 motif. 3 residues coordinate GDP: lysine 206, aspartate 208, and aspartate 211. A Phosphotyrosine modification is found at tyrosine 231. The G5 motif stretch occupies residues 235-238 (VNRS). Residues asparagine 236, arginine 237, and glutamine 239 each contribute to the GDP site. The residue at position 299 (lysine 299) is an N6-acetyllysine. Positions 515–621 (QVIRRGWLTI…WKASFLRAGV (107 aa)) constitute a PH domain. Tyrosine 593 is modified (phosphotyrosine). Lysine 594 carries the post-translational modification N6-acetyllysine. The 92-residue stretch at 649–740 (VETIRNLVDS…IIGDISTSTV (92 aa)) folds into the GED domain. Residues 737 to 866 (TSTVSTPVPP…IRPAEPSLLD (130 aa)) are disordered. Residue threonine 751 is modified to Phosphothreonine. A compositionally biased stretch (polar residues) spans 752–763 (WIQNTSSHSPTP). At serine 760 the chain carries Phosphoserine; by CDK1. 3 stretches are compositionally biased toward pro residues: residues 784–794 (TPGPPLIPVPV), 802–811 (PPIPSRPGPH), and 822–851 (SAPP…PAAP).

It belongs to the TRAFAC class dynamin-like GTPase superfamily. Dynamin/Fzo/YdjA family. In terms of assembly, oligomerizes into a helical polymer that self-assembles around the vesicle membrane, when associated to the menbrane through lipid binding. Interacts with SHANK1 and SHANK2. Interacts with SNX9. Interacts (via C-terminal proline-rich domain (PRD)) with SNX18 (via SH3 domain); this interaction regulates ATG9A and ATG16L1 trafficking from recycling endosomes to sites of autophagosome formation. Interacts with SNX33 (via SH3 domain). Interacts with MYO1E (via SH3 domain). Interacts with PSTPIP1 (via SH3 domain). Interacts with CTNND2. Interacts (via C-terminal proline-rich domain (PRD)) with BIN1 (via SH3 domain); this interaction allows the recruitment of DNM2 to the membrane tubules and inhibits self-assembly-stimulated GTPase activity on the membrane. Interacts with GABARAP, GABARAPL1 and GABARAPL2. Interacts with MAP1LC3B (the lipidate and non-lipidated LC3 form); this interaction mediates recycling endosome scission leading to autophagosome release. Interacts with ITSN1. Interacts with MYOF. Interacts (via C-terminal proline-rich domain (PRD)) with SH3BP4 (via SH3 domain); this interaction controls the GTPase activity and is prevented by EGFR-induced tyrosine phosphorylation of either DNM2 or SH3BP4. May interact with PIK3C3. May be a component of a complex composed of RAB5A (in GDP-bound form), DYN2 and PIK3C3. Interacts with SDC4; this interaction is markedly enhanced at focal ahesion site upon induction of focal adhesions and stress-fiber formation. Interacts with ACTN1. Interacts with CTTN; this interaction stimulates the intrinsic GTPase activity of DNM2 and stabilizes the association of DNM2 and actin filaments; in addition this interaction is stimulated by ligand binding to the receptor, leading to the recruitment of the DNM2-CTTN complex to the sequestered receptor-ligand complex to its internalization. Interacts with NOSTRIN (via SH3 domain); this interaction allows the recruitment of NOS3 to dynamin-positive structures. Interacts with TUBG1; this interaction may participate in centrosome cohesion. In terms of processing, phosphorylation at Ser-844 by GSK3-alpha relieves the inhibition of BIN1 and promotes endocytosis. Phosphorylation at Ser-760 by CDK1 is greatly increased upon mitotic entry. It regulates cytokinesis downstream of calcineurin, and does not affect clathrin-mediated endocytosis. Dephosphorylated by calcineurin/PP2 during cytokinesis in a Ca(2+)- and calmodulin-dependent manner. Phosphorylated on tyrosine residues by EGFR and after activation of SRC.

It is found in the cytoplasm. It localises to the cytoskeleton. The protein resides in the cytoplasmic vesicle. Its subcellular location is the clathrin-coated vesicle. The protein localises to the cell projection. It is found in the uropodium. It localises to the endosome. The protein resides in the microtubule organizing center. Its subcellular location is the centrosome. The protein localises to the centriole. It is found in the recycling endosome. It localises to the phagocytic cup. The protein resides in the phagosome membrane. Its subcellular location is the podosome. The protein localises to the cell junction. It is found in the postsynaptic density. It localises to the synapse. The protein resides in the synaptosome. Its subcellular location is the midbody. The protein localises to the membrane. It is found in the clathrin-coated pit. The enzyme catalyses GTP + H2O = GDP + phosphate + H(+). Catalyzes the hydrolysis of GTP and utilizes this energy to mediate vesicle scission at plasma membrane during endocytosis and filament remodeling at many actin structures during organization of the actin cytoskeleton. Plays an important role in vesicular trafficking processes, namely clathrin-mediated endocytosis (CME), exocytic and clathrin-coated vesicle from the trans-Golgi network, and PDGF stimulated macropinocytosis. During vesicular trafficking process, associates to the membrane, through lipid binding, and self-assembles into ring-like structure through oligomerization to form a helical polymer around the vesicle membrane and leading to vesicle scission. Plays a role in organization of the actin cytoskeleton by mediating arrangement of stress fibers and actin bundles in podocytes. During organization of the actin cytoskeleton, self-assembles into ring-like structure that directly bundles actin filaments to form typical membrane tubules decorated with dynamin spiral polymers. Self-assembly increases GTPase activity and the GTP hydrolysis causes the rapid depolymerization of dynamin spiral polymers, and results in dispersion of actin bundles. Remodels, through its interaction with CTTN, bundled actin filaments in a GTPase-dependent manner and plays a role in orchestrating the global actomyosin cytoskeleton. The interaction with CTTN stabilizes the interaction of DNM2 and actin filaments and stimulates the intrinsic GTPase activity that results in actin filament-barbed ends and increases the sensitivity of filaments in bundles to the actin depolymerizing factor, CFL1. Plays a role in the autophagy process, by participating in the formation of ATG9A vesicles destined for the autophagosomes through its interaction with SNX18, by mediating recycling endosome scission leading to autophagosome release through MAP1LC3B interaction. Also regulates maturation of apoptotic cell corpse-containing phagosomes by recruiting PIK3C3 to the phagosome membrane. Also plays a role in cytokinesis. May participate in centrosome cohesion through its interaction with TUBG1. Plays a role in the regulation of neuron morphology, axon growth and formation of neuronal growth cones. Involved in membrane tubulation. The polypeptide is Dynamin-2 (Bos taurus (Bovine)).